The sequence spans 296 residues: Phosphatidylglycerol--prolipoprotein diacylglyceryl transferase (296 aa).

7 helical membrane-spanning segments follow: residues 17–37 (LAVRWYGLMYLVGFIAAIVVG), 59–79 (MMFYGVLGTVLGGRLGYVLFY), 97–117 (GGMSFHGGFLGVTLAMVLFAW), 129–149 (FVAPMVPAGLAAGRLGNFING), 203–223 (PSQLYEIALEGIALFFVLFFF), 230–250 (LGAVSALFLIGYGLARFTVEF), and 265–285 (LSMGQWLSLPMILAGIALLVW). Arg-142 contributes to the a 1,2-diacyl-sn-glycero-3-phospho-(1'-sn-glycerol) binding site.

It belongs to the Lgt family.

It localises to the cell inner membrane. The enzyme catalyses L-cysteinyl-[prolipoprotein] + a 1,2-diacyl-sn-glycero-3-phospho-(1'-sn-glycerol) = an S-1,2-diacyl-sn-glyceryl-L-cysteinyl-[prolipoprotein] + sn-glycerol 1-phosphate + H(+). Its pathway is protein modification; lipoprotein biosynthesis (diacylglyceryl transfer). In terms of biological role, catalyzes the transfer of the diacylglyceryl group from phosphatidylglycerol to the sulfhydryl group of the N-terminal cysteine of a prolipoprotein, the first step in the formation of mature lipoproteins. This is Phosphatidylglycerol--prolipoprotein diacylglyceryl transferase from Burkholderia ambifaria (strain MC40-6).